The sequence spans 282 residues: Pantothenate synthetase (282 aa).

29–36 (MGFLHEGH) lines the ATP pocket. The active-site Proton donor is His-36. Gln-60 provides a ligand contact to (R)-pantoate. Position 60 (Gln-60) interacts with beta-alanine. 146–149 (GEKD) contributes to the ATP binding site. Gln-152 provides a ligand contact to (R)-pantoate. ATP-binding positions include Ile-175 and 183–186 (KSSR).

The protein belongs to the pantothenate synthetase family. Homodimer.

The protein resides in the cytoplasm. The enzyme catalyses (R)-pantoate + beta-alanine + ATP = (R)-pantothenate + AMP + diphosphate + H(+). The protein operates within cofactor biosynthesis; (R)-pantothenate biosynthesis; (R)-pantothenate from (R)-pantoate and beta-alanine: step 1/1. Functionally, catalyzes the condensation of pantoate with beta-alanine in an ATP-dependent reaction via a pantoyl-adenylate intermediate. The polypeptide is Pantothenate synthetase (Clostridioides difficile (strain 630) (Peptoclostridium difficile)).